A 342-amino-acid polypeptide reads, in one-letter code: S-adenosylmethionine:tRNA ribosyltransferase-isomerase (342 aa).

It belongs to the QueA family. Monomer.

It is found in the cytoplasm. It catalyses the reaction 7-aminomethyl-7-carbaguanosine(34) in tRNA + S-adenosyl-L-methionine = epoxyqueuosine(34) in tRNA + adenine + L-methionine + 2 H(+). It participates in tRNA modification; tRNA-queuosine biosynthesis. Its function is as follows. Transfers and isomerizes the ribose moiety from AdoMet to the 7-aminomethyl group of 7-deazaguanine (preQ1-tRNA) to give epoxyqueuosine (oQ-tRNA). This is S-adenosylmethionine:tRNA ribosyltransferase-isomerase from Streptococcus pyogenes serotype M2 (strain MGAS10270).